We begin with the raw amino-acid sequence, 623 residues long: Membrane protein insertase YidC (623 aa).

A run of 5 helical transmembrane segments spans residues 8 to 28, 379 to 399, 449 to 469, 507 to 527, and 543 to 563; these read LILA…LFPP, MGLA…PLAY, LPIL…FVTI, TTMA…SMWL, and IFAW…SGLV. Positions 601-617 are enriched in low complexity; the sequence is KPAAQPAGKAANDGAAP. Residues 601–623 are disordered; sequence KPAAQPAGKAANDGAAPAKKRKP.

This sequence belongs to the OXA1/ALB3/YidC family. Type 1 subfamily. In terms of assembly, interacts with the Sec translocase complex via SecD. Specifically interacts with transmembrane segments of nascent integral membrane proteins during membrane integration.

The protein resides in the cell inner membrane. Functionally, required for the insertion and/or proper folding and/or complex formation of integral membrane proteins into the membrane. Involved in integration of membrane proteins that insert both dependently and independently of the Sec translocase complex, as well as at least some lipoproteins. Aids folding of multispanning membrane proteins. The sequence is that of Membrane protein insertase YidC from Cereibacter sphaeroides (strain ATCC 17023 / DSM 158 / JCM 6121 / CCUG 31486 / LMG 2827 / NBRC 12203 / NCIMB 8253 / ATH 2.4.1.) (Rhodobacter sphaeroides).